Reading from the N-terminus, the 89-residue chain is MANTASARKRIRQNERRRERNVARMSRMRTFIKKVELAIQAGDKSAAAEAFKVAQPEMQRAAGKGVIAKNTISRKLSRLSARVKALATA.

A disordered region spans residues 1–22 (MANTASARKRIRQNERRRERNV). Basic and acidic residues predominate over residues 12 to 22 (RQNERRRERNV).

This sequence belongs to the bacterial ribosomal protein bS20 family.

In terms of biological role, binds directly to 16S ribosomal RNA. The chain is Small ribosomal subunit protein bS20 from Gluconobacter oxydans (strain 621H) (Gluconobacter suboxydans).